The chain runs to 217 residues: ATP phosphoribosyltransferase (217 aa).

This sequence belongs to the ATP phosphoribosyltransferase family. Short subfamily. Heteromultimer composed of HisG and HisZ subunits.

Its subcellular location is the cytoplasm. It catalyses the reaction 1-(5-phospho-beta-D-ribosyl)-ATP + diphosphate = 5-phospho-alpha-D-ribose 1-diphosphate + ATP. It participates in amino-acid biosynthesis; L-histidine biosynthesis; L-histidine from 5-phospho-alpha-D-ribose 1-diphosphate: step 1/9. Functionally, catalyzes the condensation of ATP and 5-phosphoribose 1-diphosphate to form N'-(5'-phosphoribosyl)-ATP (PR-ATP). Has a crucial role in the pathway because the rate of histidine biosynthesis seems to be controlled primarily by regulation of HisG enzymatic activity. The polypeptide is ATP phosphoribosyltransferase (Syntrophomonas wolfei subsp. wolfei (strain DSM 2245B / Goettingen)).